Consider the following 291-residue polypeptide: Shikimate dehydrogenase (NADP(+)) (291 aa).

Residues 18–20 and Thr70 each bind shikimate; that span reads SLS. The Proton acceptor role is filled by Lys74. Positions 95 and 110 each coordinate shikimate. Residues 134–138 and Val228 contribute to the NADP(+) site; that span reads GAGGA. Tyr230 lines the shikimate pocket. Residue Gly251 coordinates NADP(+).

Belongs to the shikimate dehydrogenase family. As to quaternary structure, homodimer.

The enzyme catalyses shikimate + NADP(+) = 3-dehydroshikimate + NADPH + H(+). It participates in metabolic intermediate biosynthesis; chorismate biosynthesis; chorismate from D-erythrose 4-phosphate and phosphoenolpyruvate: step 4/7. Involved in the biosynthesis of the chorismate, which leads to the biosynthesis of aromatic amino acids. Catalyzes the reversible NADPH linked reduction of 3-dehydroshikimate (DHSA) to yield shikimate (SA). This chain is Shikimate dehydrogenase (NADP(+)), found in Streptomyces avermitilis (strain ATCC 31267 / DSM 46492 / JCM 5070 / NBRC 14893 / NCIMB 12804 / NRRL 8165 / MA-4680).